The following is a 352-amino-acid chain: Glucose-6-phosphatase catalytic subunit 1 (352 aa).

Residues 1 to 27 lie on the Lumenal side of the membrane; that stretch reads MDLLHSWGVELAVYLQTRYGKYEGLFD. The chain crosses the membrane as a helical span at residues 28–48; that stretch reads LASTVADLHTTFFWLFPIWFH. Topologically, residues 49–56 are cytoplasmic; the sequence is LRRDTALR. A helical transmembrane segment spans residues 57–77; sequence LIWVAVIGDWLNLVLKWVLFG. Topologically, residues 78 to 113 are lumenal; that stretch reads ERPYWWVHETKFYGAGPAPSLQQFPITCETGPGSPS. Substrate is bound at residue Arg79. A helical membrane pass occupies residues 114-134; sequence GHAMGAAGVWYVMVTALLSIA. Catalysis depends on His115, which acts as the Proton donor. Residues 135 to 141 lie on the Cytoplasmic side of the membrane; that stretch reads REKQCPP. Residues 142 to 162 form a helical membrane-spanning segment; sequence LLYRFLYIGLWMLMGLVELVV. Over 163–166 the chain is Lumenal; it reads CISR. Residue Arg166 coordinates substrate. The chain crosses the membrane as a helical span at residues 167 to 187; it reads VYMAAHFPHQVIAGIITGTLV. The active-site Nucleophile is the His172. The Cytoplasmic portion of the chain corresponds to 188 to 205; sequence AEVVSKEKWIYSASLKKY. The helical transmembrane segment at 206–226 threads the bilayer; sequence FLITLFLTSFAVGFYVLLKAL. Topologically, residues 227-256 are lumenal; sequence DVDLLWTMEKAQKWCIRPEWVHLDSAPFAS. A helical transmembrane segment spans residues 257 to 276; the sequence is LLRNMGSLFGLGLGLHSPFY. Residues 277–289 lie on the Cytoplasmic side of the membrane; sequence KTTKMRIMSAPLR. The chain crosses the membrane as a helical span at residues 290-310; sequence IGCIVISVSLLHLLDGWTFSP. Residues 311–324 are Lumenal-facing; that stretch reads ENHMTFYALSFGKS. Residues 325–345 traverse the membrane as a helical segment; it reads AVALLIPTTLVPWALSKIYPV. Residues 346 to 352 lie on the Cytoplasmic side of the membrane; the sequence is KTEGKNL. Residues 349-352 carry the Prevents secretion from ER motif; sequence GKNL.

The protein belongs to the glucose-6-phosphatase family.

The protein localises to the endoplasmic reticulum membrane. The enzyme catalyses D-glucose 6-phosphate + H2O = D-glucose + phosphate. Its pathway is carbohydrate biosynthesis; gluconeogenesis. Its function is as follows. Hydrolyzes glucose-6-phosphate to glucose in the endoplasmic reticulum. Forms with the glucose-6-phosphate transporter (SLC37A4/G6PT) the complex responsible for glucose production in the terminal step of glycogenolysis and gluconeogenesis. Hence, it is the key enzyme in homeostatic regulation of blood glucose levels. The chain is Glucose-6-phosphatase catalytic subunit 1 (g6pc1) from Haplochromis nubilus (Blue Victoria mouthbrooder).